Here is a 44-residue protein sequence, read N- to C-terminus: MIELDKSNFEEEVLKAEGTVLVDFWSPSCEPCKALMPHVHDFEE.

Residues 2 to 44 enclose the Thioredoxin domain; the sequence is IELDKSNFEEEVLKAEGTVLVDFWSPSCEPCKALMPHVHDFEE. Cys29 and Cys32 are disulfide-bonded.

The protein belongs to the thioredoxin family.

In terms of biological role, participates in various redox reactions through the reversible oxidation of its active center dithiol to a disulfide and catalyzes dithiol-disulfide exchange reactions. This Tissierella creatinophila protein is Thioredoxin (trxA).